The sequence spans 347 residues: Bifunctional methylenetetrahydrofolate dehydrogenase/cyclohydrolase 2, mitochondrial (347 aa).

Residues 98 to 102 and 145 to 147 contribute to the substrate site; these read YVRNK and VQL. NAD(+) contacts are provided by residues 214-216 and Arg247; that span reads GRS. 323–327 contacts substrate; the sequence is PGGVG.

It belongs to the tetrahydrofolate dehydrogenase/cyclohydrolase family. Mg(2+) is required as a cofactor. In terms of tissue distribution, isoform 1, isoform 4 and isoform 5 are expressed in brain and placenta.

Its subcellular location is the mitochondrion inner membrane. The enzyme catalyses (6R)-5,10-methylene-5,6,7,8-tetrahydrofolate + NAD(+) = (6R)-5,10-methenyltetrahydrofolate + NADH. It catalyses the reaction (6R)-5,10-methenyltetrahydrofolate + H2O = (6R)-10-formyltetrahydrofolate + H(+). The catalysed reaction is (6R)-5,10-methylene-5,6,7,8-tetrahydrofolate + NADP(+) = (6R)-5,10-methenyltetrahydrofolate + NADPH. It functions in the pathway one-carbon metabolism; tetrahydrofolate interconversion. Bifunctional mitochondrial folate-interconverting enzyme that has both NAD/NADP-dependent methylenetetrahydrofolate dehydrogenase and methenyltetrahydrofolate cyclohydrolase activities. This chain is Bifunctional methylenetetrahydrofolate dehydrogenase/cyclohydrolase 2, mitochondrial, found in Homo sapiens (Human).